Here is a 144-residue protein sequence, read N- to C-terminus: Bacilliredoxin SSP1311 (144 aa).

This sequence belongs to the bacilliredoxin family.

The sequence is that of Bacilliredoxin SSP1311 from Staphylococcus saprophyticus subsp. saprophyticus (strain ATCC 15305 / DSM 20229 / NCIMB 8711 / NCTC 7292 / S-41).